The primary structure comprises 337 residues: 5-formaminoimidazole-4-carboxamide-1-(beta)-D-ribofuranosyl 5'-monophosphate synthetase (337 aa).

Residues His23 and Ser87 each contribute to the 5-amino-1-(5-phospho-beta-D-ribosyl)imidazole-4-carboxamide site. Residues 121–328 enclose the ATP-grasp domain; sequence MRLLEYAGIP…IAHEIVNAVK (208 aa). Residues 144–191 and Glu213 contribute to the ATP site; that span reads PVIV…VPAY. Asn233 is a binding site for 5-amino-1-(5-phospho-beta-D-ribosyl)imidazole-4-carboxamide. Positions 272 and 285 each coordinate Mg(2+).

Belongs to the phosphohexose mutase family. It depends on Mg(2+) as a cofactor. Mn(2+) is required as a cofactor.

It catalyses the reaction 5-amino-1-(5-phospho-beta-D-ribosyl)imidazole-4-carboxamide + formate + ATP = 5-formamido-1-(5-phospho-D-ribosyl)imidazole-4-carboxamide + ADP + phosphate. The protein operates within purine metabolism; IMP biosynthesis via de novo pathway; 5-formamido-1-(5-phospho-D-ribosyl)imidazole-4-carboxamide from 5-amino-1-(5-phospho-D-ribosyl)imidazole-4-carboxamide (formate route): step 1/1. Catalyzes the ATP- and formate-dependent formylation of 5-aminoimidazole-4-carboxamide-1-beta-d-ribofuranosyl 5'-monophosphate (AICAR) to 5-formaminoimidazole-4-carboxamide-1-beta-d-ribofuranosyl 5'-monophosphate (FAICAR) in the absence of folates. The sequence is that of 5-formaminoimidazole-4-carboxamide-1-(beta)-D-ribofuranosyl 5'-monophosphate synthetase from Caldivirga maquilingensis (strain ATCC 700844 / DSM 13496 / JCM 10307 / IC-167).